The chain runs to 436 residues: Protein arginine methyltransferase NDUFAF7, mitochondrial (436 aa).

Residues 1-41 (MNALVRRCVARTGIPSIWRRKCFSSGNEPAESNHVTPMLRH) constitute a mitochondrion transit peptide. The tract at residues 413 to 436 (QGGKACQSEAPSTSVPGFDELVWH) is disordered.

It belongs to the NDUFAF7 family. As to quaternary structure, interacts with NDUFS2.

Its subcellular location is the mitochondrion. The enzyme catalyses L-arginyl-[protein] + 2 S-adenosyl-L-methionine = N(omega),N(omega)'-dimethyl-L-arginyl-[protein] + 2 S-adenosyl-L-homocysteine + 2 H(+). In terms of biological role, arginine methyltransferase involved in the assembly or stability of mitochondrial NADH:ubiquinone oxidoreductase complex (complex I). Acts by mediating symmetric dimethylation of 'Arg-118' of NDUFS2 after it assembles into the complex I, stabilizing the early intermediate complex. The chain is Protein arginine methyltransferase NDUFAF7, mitochondrial from Rattus norvegicus (Rat).